The primary structure comprises 321 residues: uncharacterized protein (321 aa).

An N-terminal signal peptide occupies residues 1 to 18 (MKKMKKLLLLLSASFAFS).

This is an uncharacterized protein from Aquifex aeolicus (strain VF5).